The following is a 109-amino-acid chain: Large ribosomal subunit protein uL22 (109 aa).

Belongs to the universal ribosomal protein uL22 family. As to quaternary structure, part of the 50S ribosomal subunit.

This protein binds specifically to 23S rRNA; its binding is stimulated by other ribosomal proteins, e.g. L4, L17, and L20. It is important during the early stages of 50S assembly. It makes multiple contacts with different domains of the 23S rRNA in the assembled 50S subunit and ribosome. Functionally, the globular domain of the protein is located near the polypeptide exit tunnel on the outside of the subunit, while an extended beta-hairpin is found that lines the wall of the exit tunnel in the center of the 70S ribosome. This is Large ribosomal subunit protein uL22 from Dechloromonas aromatica (strain RCB).